A 56-amino-acid chain; its full sequence is Lantibiotic subtilin (56 aa).

The propeptide occupies 1–24 (MSKFDDFDLDVVKVSKQDSKITPQ). Position 25 is an N2-succinyltryptophan; partial (W25). Positions 27–31 (SESLC) form a cross-link, lanthionine (Ser-Cys). Position 29 is a 2,3-didehydroalanine (Ser) (S29). Cross-links (beta-methyllanthionine (Thr-Cys)) lie at residues 32–35 (TPGC), 37–43 (TGALQTC), 47–50 (TLTC), and 49–52 (TCNC). T42 bears the (Z)-2,3-didehydrobutyrine mark. 2,3-didehydroalanine (Ser) is present on S55.

It belongs to the type A lantibiotic family. Post-translationally, maturation of lantibiotics involves the enzymatic conversion of Thr, and Ser into dehydrated AA and the formation of thioether bonds with cysteine. This is followed by membrane translocation and cleavage of the modified precursor. In terms of processing, succinylated subtilin is 10-20 times less active than subtilin. The ratio subtilin/succinylated subtilin is about 1:2 after 24 hours growth. The 2,3-didehydrobutyrine is determined to be the Z-isomer.

In terms of biological role, lanthionine-containing peptide antibiotic (lantibiotic) active on Gram-positive bacteria. The bactericidal activity of lantibiotics is based on depolarization of energized bacterial cytoplasmic membranes, initiated by the formation of aqueous transmembrane pores. This Bacillus subtilis protein is Lantibiotic subtilin (spaS).